A 475-amino-acid chain; its full sequence is Threonine synthase (475 aa).

At K120 the chain carries N6-(pyridoxal phosphate)lysine.

It belongs to the threonine synthase family. Requires pyridoxal 5'-phosphate as cofactor.

It catalyses the reaction O-phospho-L-homoserine + H2O = L-threonine + phosphate. It functions in the pathway amino-acid biosynthesis; L-threonine biosynthesis; L-threonine from L-aspartate: step 5/5. In terms of biological role, catalyzes the gamma-elimination of phosphate from L-phosphohomoserine and the beta-addition of water to produce L-threonine. This is Threonine synthase (thrC) from Methylobacillus glycogenes.